The sequence spans 501 residues: Ribose import ATP-binding protein RbsA (501 aa).

ABC transporter domains are found at residues 5–241 (LQLK…VGRK) and 252–495 (APGE…VGKL). 37–44 (GENGAGKS) is a binding site for ATP.

The protein belongs to the ABC transporter superfamily. Ribose importer (TC 3.A.1.2.1) family. In terms of assembly, the complex is composed of an ATP-binding protein (RbsA), two transmembrane proteins (RbsC) and a solute-binding protein (RbsB).

It localises to the cell inner membrane. It carries out the reaction D-ribose(out) + ATP + H2O = D-ribose(in) + ADP + phosphate + H(+). In terms of biological role, part of the ABC transporter complex RbsABC involved in ribose import. Responsible for energy coupling to the transport system. The polypeptide is Ribose import ATP-binding protein RbsA (Salmonella typhimurium (strain LT2 / SGSC1412 / ATCC 700720)).